The chain runs to 113 residues: Propane 2-monooxygenase, effector component (113 aa).

The protein belongs to the TmoD/XamoD family. In terms of assembly, the propane 2-monooxygenase multicomponent enzyme system is composed of an electron transfer component and a monooxygenase component interacting with the effector protein PrmD. The electron transfer component is composed of a reductase (PrmB), and the monooxygenase component is formed by a large subunit (PrmA) and a small subunit (PrmC).

Its function is as follows. Effector component of the propane 2-monooxygenase multicomponent enzyme system which is involved in the degradation of propane via the O2-dependent hydroxylation of propane. In Rhodococcus jostii (strain RHA1), this protein is Propane 2-monooxygenase, effector component.